The sequence spans 360 residues: C-C chemokine receptor type 4 (360 aa).

Over 1-39 the chain is Extracellular; that stretch reads MNPTDIADTTLDESIYSNYYLYESIPKPCTKEGIKAFGE. A helical membrane pass occupies residues 40-67; it reads LFLPPLYSLVFVFGLLGNSVVVLVLFKY. The Cytoplasmic segment spans residues 68–77; that stretch reads KRLRSMTDVY. A helical transmembrane segment spans residues 78-98; the sequence is LLNLAISDLLFVFSLPFWGYY. The Extracellular portion of the chain corresponds to 99–111; the sequence is AADQWVFGLGLCK. A disulfide bridge links C110 with C187. A helical membrane pass occupies residues 112-133; sequence MISWMYLVGFYSGIFFVMLMSI. The Cytoplasmic segment spans residues 134–150; it reads DRYLAIVHAVFSLRART. Residues 151–175 form a helical membrane-spanning segment; the sequence is LTYGVITSLATWSVAVFASLPGFLF. Residues 176 to 206 are Extracellular-facing; the sequence is STCYTERNHTYCKTKYSLNSTTWKVLSSLEI. Residues N183 and N194 are each glycosylated (N-linked (GlcNAc...) asparagine). Residues 207–226 traverse the membrane as a helical segment; it reads NILGLVIPLGIMLFCYSMII. The Cytoplasmic portion of the chain corresponds to 227 to 242; the sequence is RTLQHCKNEKKNKAVK. The chain crosses the membrane as a helical span at residues 243 to 267; the sequence is MIFAVVVLFLGFWTPYNIVLFLETL. Residues 268–284 lie on the Extracellular side of the membrane; sequence VELEVLQDCTFERYLDY. The chain crosses the membrane as a helical span at residues 285–308; sequence AIQATETLAFVHCCLNPIIYFFLG. Over 309-360 the chain is Cytoplasmic; that stretch reads EKFRKYILQLFKTCRGLFVLCQYCGLLQIYSADTPSSSYTQSTMDHDLHDAL.

It belongs to the G-protein coupled receptor 1 family. In terms of processing, in natural killer cells, CCL22 binding induces phosphorylation on yet undefined Ser/Thr residues, most probably by beta-adrenergic receptor kinases 1 and 2. In terms of tissue distribution, predominantly expressed in the thymus, in peripheral blood leukocytes, including T-cells, mostly CD4+ cells, and basophils, and in platelets; at lower levels, in the spleen and in monocytes. Detected also in macrophages, IL-2-activated natural killer cells and skin-homing memory T-cells, mostly the ones expressing the cutaneous lymphocyte antigen (CLA). Expressed in brain microvascular and coronary artery endothelial cells.

It localises to the cell membrane. Its function is as follows. High affinity receptor for the C-C type chemokines CCL17/TARC, CCL22/MDC and CKLF isoform 1/CKLF1. The activity of this receptor is mediated by G(i) proteins which activate a phosphatidylinositol-calcium second messenger system. Can function as a chemoattractant homing receptor on circulating memory lymphocytes and as a coreceptor for some primary HIV-2 isolates. In the CNS, could mediate hippocampal-neuron survival. The sequence is that of C-C chemokine receptor type 4 (CCR4) from Homo sapiens (Human).